Here is a 341-residue protein sequence, read N- to C-terminus: Heme A synthase (341 aa).

The next 8 membrane-spanning stretches (helical) occupy residues 7–27 (VTVW…IGGI), 92–112 (LFGR…AITK), 118–138 (MVAK…MGWF), 159–179 (LFLT…CAGV), 190–210 (FFTA…GALV), 253–273 (FLHR…PFWL), 280–300 (LFLA…VSVV), and 302–322 (IFLA…GVHM). Histidine 255 provides a ligand contact to heme. Residue histidine 308 participates in heme binding.

This sequence belongs to the COX15/CtaA family. Type 2 subfamily. In terms of assembly, interacts with CtaB. It depends on heme b as a cofactor.

The protein localises to the cell membrane. It carries out the reaction Fe(II)-heme o + 2 A + H2O = Fe(II)-heme a + 2 AH2. It functions in the pathway porphyrin-containing compound metabolism; heme A biosynthesis; heme A from heme O: step 1/1. Its function is as follows. Catalyzes the conversion of heme O to heme A by two successive hydroxylations of the methyl group at C8. The first hydroxylation forms heme I, the second hydroxylation results in an unstable dihydroxymethyl group, which spontaneously dehydrates, resulting in the formyl group of heme A. This is Heme A synthase from Anaplasma marginale (strain Florida).